Reading from the N-terminus, the 145-residue chain is Ribosome-binding factor A (145 aa).

Residues 122 to 132 are compositionally biased toward basic and acidic residues; the sequence is KVQRDLESAPR. Positions 122 to 145 are disordered; that stretch reads KVQRDLESAPREDDEGEPDSSSRD.

The protein belongs to the RbfA family. As to quaternary structure, monomer. Binds 30S ribosomal subunits, but not 50S ribosomal subunits or 70S ribosomes.

Its subcellular location is the cytoplasm. Its function is as follows. One of several proteins that assist in the late maturation steps of the functional core of the 30S ribosomal subunit. Associates with free 30S ribosomal subunits (but not with 30S subunits that are part of 70S ribosomes or polysomes). Required for efficient processing of 16S rRNA. May interact with the 5'-terminal helix region of 16S rRNA. The polypeptide is Ribosome-binding factor A (Methylorubrum extorquens (strain PA1) (Methylobacterium extorquens)).